The following is a 579-amino-acid chain: Carboxysome shell carbonic anhydrase (579 aa).

A disordered region spans residues 72 to 95; sequence GGGRVRSARDQRQPGWVRRDKGAT. Residues 78–93 are compositionally biased toward basic and acidic residues; it reads SARDQRQPGWVRRDKG. C240 provides a ligand contact to Zn(2+). The active-site Proton acceptor is the D242. Residues H308 and C319 each coordinate Zn(2+).

This sequence belongs to the beta-class carbonic anhydrase family. CsoSCA subfamily. In terms of assembly, homodimer. The cofactor is Zn(2+).

The protein localises to the carboxysome. The catalysed reaction is hydrogencarbonate + H(+) = CO2 + H2O. Its activity is regulated as follows. Inhibited by dithiothreitol, partially inhibited by acetatzolamide and cyanide. Reversible hydration of carbon dioxide. Essential for photosynthetic carbon dioxide fixation, supplies CO(2) to RuBisCO (ribulose bisphosphate carboxylase, cbbL-cbbS) in the carboxysome. The chain is Carboxysome shell carbonic anhydrase from Parasynechococcus marenigrum (strain WH8102).